Consider the following 348-residue polypeptide: Rhodopsin (348 aa).

Topologically, residues 1–33 (TEGPYFYIPMVNTTGIVRSPYEYPQYYLVNPAA) are extracellular. Asn12 carries an N-linked (GlcNAc...) asparagine glycan. The helical transmembrane segment at 34–58 (YAMLGAYMFFLIIVGFPVNFMTLYV) threads the bilayer. Over 59 to 70 (TLEHKKLRTPLN) the chain is Cytoplasmic. A helical membrane pass occupies residues 71–93 (YILLNLAVADLFMVIGGFTTTIY). The Extracellular segment spans residues 94–107 (TSMHGYFVLGRLGC). Residues Cys107 and Cys184 are joined by a disulfide bond. The helical transmembrane segment at 108-130 (NIEGFFATLGGMISLWSLAVLAI) threads the bilayer. Positions 131-133 (ERW) match the 'Ionic lock' involved in activated form stabilization motif. Topologically, residues 131–149 (ERWVVVCKPISNFRFGENH) are cytoplasmic. Residues 150–170 (AIMGVSLTWAMALACTVPPLV) form a helical membrane-spanning segment. The Extracellular segment spans residues 171-199 (GWSRYIPEGMQCSCGIDYYTRAEGFNNES). Residue Asn197 is glycosylated (N-linked (GlcNAc...) asparagine). The chain crosses the membrane as a helical span at residues 200 to 221 (FVLYMFFCHFTIPLTIIFFCYG). The Cytoplasmic portion of the chain corresponds to 222–249 (RLLCAVKEAAAAQQESETTQRAEREVTR). The helical transmembrane segment at 250–271 (MVIIMVIGFLICWLPYASVAWF) threads the bilayer. Over 272 to 283 (IFTHQGSEFGPL) the chain is Extracellular. A helical membrane pass occupies residues 284 to 305 (FMTIPAFFAKSSSIYNPMIYIC). Position 293 is an N6-(retinylidene)lysine (Lys293). Topologically, residues 306-348 (MNKQFRHCMITTLFCGKNPFEGEEEGASSTKTEASSASSVSPA) are cytoplasmic. Cys320 is lipidated: S-palmitoyl cysteine. The tract at residues 327–348 (GEEEGASSTKTEASSASSVSPA) is disordered. Residues 332–348 (ASSTKTEASSASSVSPA) show a composition bias toward low complexity.

The protein belongs to the G-protein coupled receptor 1 family. Opsin subfamily. Post-translationally, phosphorylated on some or all of the serine and threonine residues present in the C-terminal region. In terms of processing, contains one covalently linked retinal chromophore.

Its subcellular location is the membrane. It localises to the cell projection. The protein localises to the cilium. It is found in the photoreceptor outer segment. In terms of biological role, photoreceptor required for image-forming vision at low light intensity. While most salt water fish species use retinal as chromophore, most freshwater fish use 3-dehydroretinal, or a mixture of retinal and 3-dehydroretinal. Light-induced isomerization of 11-cis to all-trans retinal triggers a conformational change that activates signaling via G-proteins. Subsequent receptor phosphorylation mediates displacement of the bound G-protein alpha subunit by arrestin and terminates signaling. The protein is Rhodopsin (rho) of Sargocentron microstoma (Smallmouth squirrelfish).